Reading from the N-terminus, the 370-residue chain is Protein RecA (370 aa).

The interval Met-1–Asp-20 is disordered. Gly-78–Thr-85 is a binding site for ATP.

The protein belongs to the RecA family.

The protein localises to the cytoplasm. Can catalyze the hydrolysis of ATP in the presence of single-stranded DNA, the ATP-dependent uptake of single-stranded DNA by duplex DNA, and the ATP-dependent hybridization of homologous single-stranded DNAs. It interacts with LexA causing its activation and leading to its autocatalytic cleavage. The protein is Protein RecA of Prochlorococcus marinus (strain MIT 9515).